Reading from the N-terminus, the 94-residue chain is Co-chaperonin GroES (94 aa).

The protein belongs to the GroES chaperonin family. As to quaternary structure, heptamer of 7 subunits arranged in a ring. Interacts with the chaperonin GroEL.

The protein localises to the cytoplasm. In terms of biological role, together with the chaperonin GroEL, plays an essential role in assisting protein folding. The GroEL-GroES system forms a nano-cage that allows encapsulation of the non-native substrate proteins and provides a physical environment optimized to promote and accelerate protein folding. GroES binds to the apical surface of the GroEL ring, thereby capping the opening of the GroEL channel. This chain is Co-chaperonin GroES, found in Clostridium beijerinckii (strain ATCC 51743 / NCIMB 8052) (Clostridium acetobutylicum).